Consider the following 168-residue polypeptide: Anti-sigma-F factor RsbW (168 aa).

The disordered stretch occupies residues 1 to 31; it reads MTDQLEDQTQGGSTVDRSLPGGCMADSDLPT. Residues 7–16 show a composition bias toward polar residues; it reads DQTQGGSTVD. 124–128 lines the ATP pocket; that stretch reads PGSFS.

This sequence belongs to the anti-sigma-factor family. In terms of assembly, homodimer.

A cognate anti-sigma factor for alternative sigma factor SigF. Alternative sigma factors are held in an inactive form by an anti-sigma factor. Binds ATP and GTP, may hydrolyze both. The chain is Anti-sigma-F factor RsbW (rsbW) from Mycobacterium tuberculosis (strain CDC 1551 / Oshkosh).